The chain runs to 186 residues: ATP synthase subunit b, chloroplastic (186 aa).

The chain crosses the membrane as a helical span at residues 27 to 49; that stretch reads LATNPINLSVVLGVLIFFGKGVL.

Belongs to the ATPase B chain family. In terms of assembly, F-type ATPases have 2 components, F(1) - the catalytic core - and F(0) - the membrane proton channel. F(1) has five subunits: alpha(3), beta(3), gamma(1), delta(1), epsilon(1). F(0) has four main subunits: a(1), b(1), b'(1) and c(10-14). The alpha and beta chains form an alternating ring which encloses part of the gamma chain. F(1) is attached to F(0) by a central stalk formed by the gamma and epsilon chains, while a peripheral stalk is formed by the delta, b and b' chains.

The protein resides in the plastid. The protein localises to the chloroplast thylakoid membrane. Functionally, f(1)F(0) ATP synthase produces ATP from ADP in the presence of a proton or sodium gradient. F-type ATPases consist of two structural domains, F(1) containing the extramembraneous catalytic core and F(0) containing the membrane proton channel, linked together by a central stalk and a peripheral stalk. During catalysis, ATP synthesis in the catalytic domain of F(1) is coupled via a rotary mechanism of the central stalk subunits to proton translocation. Component of the F(0) channel, it forms part of the peripheral stalk, linking F(1) to F(0). In Illicium oligandrum (Star anise), this protein is ATP synthase subunit b, chloroplastic.